A 252-amino-acid polypeptide reads, in one-letter code: Isoprenyl transferase 2 (252 aa).

Residue aspartate 26 is part of the active site. Aspartate 26 provides a ligand contact to Mg(2+). Substrate contacts are provided by residues 27–30 (GNGR), tryptophan 31, arginine 39, histidine 43, and 71–73 (SSE). Asparagine 74 (proton acceptor) is an active-site residue. Substrate contacts are provided by residues tryptophan 75, arginine 77, arginine 194, and 200–202 (RLS). Glutamate 213 provides a ligand contact to Mg(2+).

This sequence belongs to the UPP synthase family. As to quaternary structure, homodimer. The cofactor is Mg(2+).

Functionally, catalyzes the condensation of isopentenyl diphosphate (IPP) with allylic pyrophosphates generating different type of terpenoids. The protein is Isoprenyl transferase 2 of Bradyrhizobium diazoefficiens (strain JCM 10833 / BCRC 13528 / IAM 13628 / NBRC 14792 / USDA 110).